A 106-amino-acid polypeptide reads, in one-letter code: Vacuolar ATPase assembly integral membrane protein VMA21 homolog (106 aa).

The segment at 1-26 is disordered; it reads MSNKNKKSGGAGNGAAQKQTRQQSHD. Residues 1-32 are Cytoplasmic-facing; that stretch reads MSNKNKKSGGAGNGAAQKQTRQQSHDSQDYSS. Residues 33-53 form a helical membrane-spanning segment; sequence FKIVLFYCMLIVFLPVVTFFL. Over 54–69 the chain is Lumenal; it reads LKGFVLDRFFSLSEVK. A helical membrane pass occupies residues 70–90; the sequence is VNIASAVGAVVSLHIALGLYI. Over 91 to 106 the chain is Cytoplasmic; the sequence is YRAYFGATGSKAVKED.

This sequence belongs to the VMA21 family.

The protein resides in the endoplasmic reticulum membrane. The protein localises to the endoplasmic reticulum-Golgi intermediate compartment membrane. It localises to the cytoplasmic vesicle. Its subcellular location is the COPII-coated vesicle membrane. Its function is as follows. Required for the assembly of the V0 complex of the vacuolar ATPase (V-ATPase) in the endoplasmic reticulum. The chain is Vacuolar ATPase assembly integral membrane protein VMA21 homolog from Drosophila ananassae (Fruit fly).